The sequence spans 362 residues: Phospho-N-acetylmuramoyl-pentapeptide-transferase (362 aa).

Transmembrane regions (helical) follow at residues 28–48, 72–92, 100–120, 134–154, 170–190, 201–221, 241–261, 265–285, 290–310, and 339–359; these read AACM…IRWL, GTPT…TLLW, VWAV…DDYL, VKLI…MSLT, VLIP…MGAS, GLAI…AYLV, LTVF…FNAP, VFMG…VAIA, IVLA…IVQV, and TIVI…LATL.

The protein belongs to the glycosyltransferase 4 family. MraY subfamily. Mg(2+) serves as cofactor.

It is found in the cell inner membrane. The enzyme catalyses UDP-N-acetyl-alpha-D-muramoyl-L-alanyl-gamma-D-glutamyl-meso-2,6-diaminopimeloyl-D-alanyl-D-alanine + di-trans,octa-cis-undecaprenyl phosphate = di-trans,octa-cis-undecaprenyl diphospho-N-acetyl-alpha-D-muramoyl-L-alanyl-D-glutamyl-meso-2,6-diaminopimeloyl-D-alanyl-D-alanine + UMP. It functions in the pathway cell wall biogenesis; peptidoglycan biosynthesis. In terms of biological role, catalyzes the initial step of the lipid cycle reactions in the biosynthesis of the cell wall peptidoglycan: transfers peptidoglycan precursor phospho-MurNAc-pentapeptide from UDP-MurNAc-pentapeptide onto the lipid carrier undecaprenyl phosphate, yielding undecaprenyl-pyrophosphoryl-MurNAc-pentapeptide, known as lipid I. This is Phospho-N-acetylmuramoyl-pentapeptide-transferase from Granulibacter bethesdensis (strain ATCC BAA-1260 / CGDNIH1).